Here is a 259-residue protein sequence, read N- to C-terminus: Small ribosomal subunit protein eS1 (259 aa).

Residues 1–18 are compositionally biased toward basic residues; that stretch reads MAVGKNKRISKGKKGGKK. Positions 1 to 22 are disordered; that stretch reads MAVGKNKRISKGKKGGKKKASD.

It belongs to the eukaryotic ribosomal protein eS1 family. As to quaternary structure, component of the small ribosomal subunit. Mature ribosomes consist of a small (40S) and a large (60S) subunit. The 40S subunit contains about 33 different proteins and 1 molecule of RNA (18S). The 60S subunit contains about 49 different proteins and 3 molecules of RNA (25S, 5.8S and 5S).

The protein resides in the cytoplasm. The protein is Small ribosomal subunit protein eS1 of Chlamydomonas reinhardtii (Chlamydomonas smithii).